Consider the following 1065-residue polypeptide: NLR family CARD domain-containing protein 3 (1065 aa).

A compositionally biased stretch (basic and acidic residues) spans 1-10 (MRKQEVRTGR). Residues 1–62 (MRKQEVRTGR…PLGPCSNDSR (62 aa)) are disordered. An NACHT domain is found at 139-460 (RVSITIGVAG…YCFTHLSLQE (322 aa)). ATP is bound at residue 145 to 152 (GVAGMGKT). Positions 457–460 (SLQE) match the TRAF6-binding motif. LRR repeat units lie at residues 617-639 (EANL…LLYC), 641-663 (KLRL…VLSG), 665-688 (DCRI…ALAR), 693-716 (NRSL…ALAD), 721-744 (NRTL…SMAE), 749-772 (NRTL…RMAD), 777-800 (NRSL…ALAE), 805-828 (NQGL…ALMG), 833-856 (NQTL…AIAH), 861-884 (NSTL…AIAV), 889-912 (NRTL…ALGQ), 917-940 (NRSL…AVAR), 945-968 (NTAL…VLGE), 973-996 (NRTL…ALAN), 1001-1029 (NSSL…LSGN), and 1031-1052 (RLQH…MISE).

It belongs to the NLRP family. Directly interacts (via CARD) with TMEM173/STING; this interaction reduces TMEM173 trafficking to the perinuclear region in response to interferon stimulatory DNA. Also interacts, but to a lesser extent, with TBK1. Interacts with TRAF6; this interaction results in decreased TRAF6 'Lys-63'-linked polyubiquitination, but leaves 'Lys-48'-linked chains unchanged, promoting TRAF6 protein degradation. Interacts with PIK3R1/PIK3R2; this interaction disrupts the association between PIK3R1/PIK3R2 and the p110 catalytic subunit PIK3CA/PIK3CB/PIK3CD and reduces PIK3R1/PIK3R2 activation. Weakly interacts with PYCARD/ASC. Interacts with CASP1 and CASP5.

Its subcellular location is the cytoplasm. Negative regulator of the innate immune response. Attenuates signaling pathways activated by Toll-like receptors (TLRs) and the DNA sensor STING/TMEM173 in response to pathogen-associated molecular patterns, such as intracellular poly(dA:dT), but not poly(I:C), or in response to DNA virus infection, including that of Herpes simplex virus 1 (HSV1). May affect TLR4 signaling by acting at the level of TRAF6 ubiquitination, decreasing the activating 'Lys-63'-linked ubiquitination and leaving unchanged the degradative 'Lys-48'-linked ubiquitination. Inhibits the PI3K-AKT-mTOR pathway possibly by directly interacting with the posphatidylinositol 3-kinase regulatory subunit p85 (PIK3R1/PIK3R2) and disrupting the association between PIK3R1/PIK3R2 and the catalytic subunit p110 (PIK3CA/PIK3CB/PIK3CD) and reducing PIK3R1/PIK3R2 activation. Via its regulation of the PI3K-AKT-mTOR pathway, controls cell proliferation, predominantly in intestinal epithelial cells. May also affect NOD1- or NOD2-mediated NF-kappa-B activation. Might also affect the inflammatory response by preventing NLRP3 inflammasome formation, CASP1 cleavage and IL1B maturation. The sequence is that of NLR family CARD domain-containing protein 3 (NLRC3) from Homo sapiens (Human).